Consider the following 525-residue polypeptide: Protein disulfide-isomerase A2 (525 aa).

A signal peptide spans 1–21 (MSRQLLPVLLLLLLRASCPWG). The Thioredoxin 1 domain occupies 27 to 152 (RSPSEEPPEE…IAEWLRRRVG (126 aa)). Residues C71 and C74 each act as nucleophile in the active site. A disulfide bridge connects residues C71 and C74. Residues N127 and N284 are each glycosylated (N-linked (GlcNAc...) asparagine). The Thioredoxin 2 domain occupies 367–496 (VLNGQVKPYL…FSKFLDNGGV (130 aa)). Active-site nucleophile residues include C418 and C421. C418 and C421 are oxidised to a cystine. The tract at residues 492–525 (DNGGVLPTEEPPEEPAAPFPEPPANSTMGSKEEL) is disordered. Over residues 505 to 514 (EPAAPFPEPP) the composition is skewed to pro residues. An N-linked (GlcNAc...) asparagine glycan is attached at N516. The span at 516–525 (NSTMGSKEEL) shows a compositional bias: polar residues. A Prevents secretion from ER motif is present at residues 522–525 (KEEL).

It belongs to the protein disulfide isomerase family. Monomer; predominantly as monomer under reducing conditions. Homodimer; disulfide-linked. Part of a large chaperone multiprotein complex comprising DNAJB11, HSP90B1, HSPA5, HYOU, PDIA2, PDIA4, PDIA6, PPIB, SDF2L1, UGGT1 and very small amounts of ERP29, but not, or at very low levels, CALR nor CANX. In terms of processing, the disulfide-linked homodimer exhibits an enhanced chaperone activity. Post-translationally, glycosylated. Highly expressed in pancreas (at protein level).

The protein resides in the endoplasmic reticulum lumen. The catalysed reaction is Catalyzes the rearrangement of -S-S- bonds in proteins.. Functionally, acts as an intracellular estrogen-binding protein. May be involved in modulating cellular levels and biological functions of estrogens in the pancreas. May act as a chaperone that inhibits aggregation of misfolded proteins. The polypeptide is Protein disulfide-isomerase A2 (PDIA2) (Homo sapiens (Human)).